Here is a 955-residue protein sequence, read N- to C-terminus: Alpha-1,4 glucan phosphorylase L isozyme, chloroplastic/amyloplastic (955 aa).

A chloroplast-targeting transit peptide spans 1–43; it reads MSRLSGITPRARDDRSQFQNPRLEIAVPDRTAGLQRTKRTLLV. The disordered stretch occupies residues 522–550; sequence KVVTESEKDELEEKDTELEKDEDPVPAPI. The segment covering 528-545 has biased composition (acidic residues); sequence EKDELEEKDTELEKDEDP. The residue at position 801 (Lys801) is an N6-(pyridoxal phosphate)lysine.

It belongs to the glycogen phosphorylase family. The cofactor is pyridoxal 5'-phosphate.

The protein resides in the plastid. It is found in the chloroplast. Its subcellular location is the amyloplast. The catalysed reaction is [(1-&gt;4)-alpha-D-glucosyl](n) + phosphate = [(1-&gt;4)-alpha-D-glucosyl](n-1) + alpha-D-glucose 1-phosphate. Phosphorylase is an important allosteric enzyme in carbohydrate metabolism. Enzymes from different sources differ in their regulatory mechanisms and in their natural substrates. However, all known phosphorylases share catalytic and structural properties. The sequence is that of Alpha-1,4 glucan phosphorylase L isozyme, chloroplastic/amyloplastic from Ipomoea batatas (Sweet potato).